A 337-amino-acid chain; its full sequence is MGVTVAIDCMGGDHGPAVTVPAARAFLRNHPEARIVLVGRQDALEQAMGAIGNGFGERLSLRAASEVIAMDDPPAIAMRSKKDSSMRVAIDLVKSGEAQAAVSAGNTGALMAISRFVLKTLPGIDRPAIATILPTRKGQTYVLDLGANVDCLPEHLLQFGIMGAMLVSAVEHLDRPTVGLLNIGEEAIKGNEVVKRAAELLKTSGLNFYGNVEGDDIYKGTTDVVVCDGFVGNVALKTSEGLAQMLATFLREEFSRNLLSKAMALIAMPALKRFKHRVDHRRYNGAALLGLRGVVVKSHGSADAFAFEQAIHRAAEAASNRLIERITERMTAMGVAA.

It belongs to the PlsX family. As to quaternary structure, homodimer. Probably interacts with PlsY.

It localises to the cytoplasm. The enzyme catalyses a fatty acyl-[ACP] + phosphate = an acyl phosphate + holo-[ACP]. Its pathway is lipid metabolism; phospholipid metabolism. In terms of biological role, catalyzes the reversible formation of acyl-phosphate (acyl-PO(4)) from acyl-[acyl-carrier-protein] (acyl-ACP). This enzyme utilizes acyl-ACP as fatty acyl donor, but not acyl-CoA. The chain is Phosphate acyltransferase from Aromatoleum aromaticum (strain DSM 19018 / LMG 30748 / EbN1) (Azoarcus sp. (strain EbN1)).